The primary structure comprises 122 residues: MNNLLSAYVTMLLILLSISGGAIASENCNDTSGVHQKILVCIQNEIAKSETQIRNNISSKSIDYGFPDDFYSKQRLAIHEKCMLYINVGGQRGELLMNQCELSMLQGLDIYIQQYIEDVDNS.

A signal peptide spans 1-24 (MNNLLSAYVTMLLILLSISGGAIA). Cystine bridges form between C28/C41 and C82/C100.

In terms of assembly, homodimer; dimerization is critical for inhibitory activity. Forms a heterotetramer with VgrG3 composed of one TsiV3 homodimer and two VgrG3 molecules.

In terms of biological role, immunity protein that plays a role in preventing early activation of toxin VgrG3. This chain is Antitoxin protein TsiV3, found in Vibrio cholerae serotype O1 (strain ATCC 39315 / El Tor Inaba N16961).